Consider the following 278-residue polypeptide: Undecaprenyl-diphosphatase (278 aa).

8 helical membrane passes run 3-23 (YILI…IPIS), 42-62 (VAYS…IFYF), 88-108 (FLVI…LFVI), 112-132 (ILGL…IVIY), 152-172 (IIIV…RSGM), 190-210 (LSFI…VLFS), 225-245 (GLLI…NALL), and 253-273 (VVLL…LSDI).

This sequence belongs to the UppP family.

The protein localises to the cell membrane. It catalyses the reaction di-trans,octa-cis-undecaprenyl diphosphate + H2O = di-trans,octa-cis-undecaprenyl phosphate + phosphate + H(+). Catalyzes the dephosphorylation of undecaprenyl diphosphate (UPP). This is Undecaprenyl-diphosphatase from Saccharolobus solfataricus (strain ATCC 35092 / DSM 1617 / JCM 11322 / P2) (Sulfolobus solfataricus).